We begin with the raw amino-acid sequence, 676 residues long: MTDPGYVEFPGSPFQLFQPYAPAGDQPAAIEGLVQGVADGLMYQTLLGVTGSGKTFTMANVIARLGRPALVLAPNKTLAAQLYAEMRDFFPKNAVEYFVSYYDYYQPEAYVPTRDLFIEKDSSVNEHIEQMRLSATKSLLERRDTIIVGTVSCIYGIGNPGDYHAMVLILRAGDRISRREVLARLVAMQYTRNDADFTRGAFRVRGETIDIFPAESPELALRLTLFDDEVETLELFDPLTGKVRQKLPRFTVYPGSHYVTPRETVLRAIETIREELRERLSTFTNEGKLLEAQRIEQRTRFDLEMLQELGFCKGIENYSRHLSGAAPGEPPPTLIDYLPADALMFIDESHVTVGQLGGMYRGDRARKETLVQYGFRLPSALDNRPLRLEEFEARMRQCVFVSATPADYERQHADNVVEQVVRPTGLVDPEVEVRPAHTQVDDLLGEIRHRVARQERVLVTTLTKRMSEDLTDFLAEHGVRVRYLHSDIDTVERVEIIRDLRLGVFDVLVGINLLREGLDIPEVSLVAILDADKEGFLRSERSLIQTIGRAARNLHGHAILYADRITDSMRRAMDETSRRRSKQLQHNADHGITARGVNKAVRELIDGVMAPATTHDALEDAVPLAALTDEKAMAREIKRLEKLMMDHARNLEFEQAAAARDALTALKNRLLLDGVR.

Residues Gln-35–Arg-192 enclose the Helicase ATP-binding domain. Gly-48–Thr-55 lines the ATP pocket. The Beta-hairpin motif lies at Tyr-101–Val-124. Residues Gln-439 to Ile-605 form the Helicase C-terminal domain. Residues Ala-634–Arg-669 form the UVR domain.

Belongs to the UvrB family. Forms a heterotetramer with UvrA during the search for lesions. Interacts with UvrC in an incision complex.

It localises to the cytoplasm. Its function is as follows. The UvrABC repair system catalyzes the recognition and processing of DNA lesions. A damage recognition complex composed of 2 UvrA and 2 UvrB subunits scans DNA for abnormalities. Upon binding of the UvrA(2)B(2) complex to a putative damaged site, the DNA wraps around one UvrB monomer. DNA wrap is dependent on ATP binding by UvrB and probably causes local melting of the DNA helix, facilitating insertion of UvrB beta-hairpin between the DNA strands. Then UvrB probes one DNA strand for the presence of a lesion. If a lesion is found the UvrA subunits dissociate and the UvrB-DNA preincision complex is formed. This complex is subsequently bound by UvrC and the second UvrB is released. If no lesion is found, the DNA wraps around the other UvrB subunit that will check the other stand for damage. This is UvrABC system protein B from Bordetella avium (strain 197N).